Consider the following 342-residue polypeptide: Polygalacturonase inhibitor 1 (342 aa).

The N-terminal stretch at 1-29 is a signal peptide; that stretch reads MTQFNIPVTMSSSLSIILVILVSLRTALS. 2 cysteine pairs are disulfide-bonded: Cys32/Cys62 and Cys63/Cys72. An N-linked (GlcNAc...) asparagine glycan is attached at Asn64. LRR repeat units lie at residues 82-107, 108-132, 133-156, 157-180, 181-205, 206-228, 229-252, 253-275, 276-299, and 300-319; these read NNLDLSGHNLPKPYPIPSSLANLPYL, NFLYIGGINNLVGPIPPAIAKLTQL, HYLYITHTNVSGAIPDFLSQIKTL, VTLDFSYNALSGTLPPSISSLPNL, GGITFDGNRISGAIPDSYGSFSKLF, TAMTISRNRLTGKIPPTFANLNL, AFVDLSRNMLEGDASVLFGSDKNT, KKIHLAKNSLAFDLGKVGLSKNL, NGLDLRNNRIYGTLPQGLTQLKFL, and QSLNVSFNNLCGEIPQGGNL. N-linked (GlcNAc...) asparagine glycosylation is present at Asn141. N-linked (GlcNAc...) asparagine glycosylation occurs at Asn303. Cystine bridges form between Cys310–Cys332 and Cys334–Cys341.

Belongs to the polygalacturonase-inhibiting protein family.

The protein resides in the secreted. It localises to the cell wall. It is found in the membrane. In terms of biological role, inhibitor of fungal polygalacturonase. It is an important factor for plant resistance to phytopathogenic fungi. Substrate preference is polygalacturonase (PG) from A.niger &gt;&gt; PG of F.oxysporum, A.solani or B.cinerea. Not active on PG from F.moniliforme. This Phaseolus vulgaris (Kidney bean) protein is Polygalacturonase inhibitor 1 (PGIP1).